The chain runs to 200 residues: LHFPL tetraspan subfamily member 7 protein (200 aa).

Helical transmembrane passes span 5–27, 68–88, 113–133, and 150–170; these read VWVA…PAWF, VSAV…IFLL, AATA…SPFI, and LGWG…LPII.

This sequence belongs to the TMEM211 family.

It localises to the membrane. The chain is LHFPL tetraspan subfamily member 7 protein from Homo sapiens (Human).